The sequence spans 215 residues: ATP-dependent Clp protease proteolytic subunit 1 (215 aa).

Ser111 functions as the Nucleophile in the catalytic mechanism. His136 is an active-site residue.

The protein belongs to the peptidase S14 family. Fourteen ClpP subunits assemble into 2 heptameric rings which stack back to back to give a disk-like structure with a central cavity, resembling the structure of eukaryotic proteasomes.

Its subcellular location is the cytoplasm. It carries out the reaction Hydrolysis of proteins to small peptides in the presence of ATP and magnesium. alpha-casein is the usual test substrate. In the absence of ATP, only oligopeptides shorter than five residues are hydrolyzed (such as succinyl-Leu-Tyr-|-NHMec, and Leu-Tyr-Leu-|-Tyr-Trp, in which cleavage of the -Tyr-|-Leu- and -Tyr-|-Trp bonds also occurs).. Its function is as follows. Cleaves peptides in various proteins in a process that requires ATP hydrolysis. Has a chymotrypsin-like activity. Plays a major role in the degradation of misfolded proteins. The chain is ATP-dependent Clp protease proteolytic subunit 1 from Gluconobacter oxydans (strain 621H) (Gluconobacter suboxydans).